The chain runs to 164 residues: Phosphopantetheine adenylyltransferase (164 aa).

Ser-11 is a substrate binding site. Residues 11 to 12 (SF) and His-19 each bind ATP. Residues Lys-43, Ala-76, and Arg-90 each coordinate substrate. Residues 91 to 93 (GLR), Glu-101, and 126 to 132 (YQHISSS) contribute to the ATP site.

It belongs to the bacterial CoaD family. In terms of assembly, homohexamer. Requires Mg(2+) as cofactor.

The protein localises to the cytoplasm. It carries out the reaction (R)-4'-phosphopantetheine + ATP + H(+) = 3'-dephospho-CoA + diphosphate. It functions in the pathway cofactor biosynthesis; coenzyme A biosynthesis; CoA from (R)-pantothenate: step 4/5. In terms of biological role, reversibly transfers an adenylyl group from ATP to 4'-phosphopantetheine, yielding dephospho-CoA (dPCoA) and pyrophosphate. The chain is Phosphopantetheine adenylyltransferase from Streptococcus sanguinis (strain SK36).